A 67-amino-acid chain; its full sequence is Probable Sec-independent protein translocase protein TatE (67 aa).

Residues isoleucine 4–glycine 21 traverse the membrane as a helical segment. Positions methionine 43–glutamate 67 are disordered.

It belongs to the TatA/E family. TatE subfamily.

It localises to the cell inner membrane. In terms of biological role, part of the twin-arginine translocation (Tat) system that transports large folded proteins containing a characteristic twin-arginine motif in their signal peptide across membranes. TatE shares overlapping functions with TatA. The chain is Probable Sec-independent protein translocase protein TatE from Enterobacter lignolyticus (strain SCF1).